Here is a 407-residue protein sequence, read N- to C-terminus: Multifunctional CCA protein (407 aa).

Positions 8 and 11 each coordinate ATP. Gly-8 and Arg-11 together coordinate CTP. Mg(2+)-binding residues include Asp-21 and Asp-23. Positions 91, 137, and 140 each coordinate ATP. CTP contacts are provided by Arg-91, Arg-137, and Arg-140. The HD domain maps to 228–329 (TGMHTLMVSQ…IKIFDKMDLW (102 aa)).

Belongs to the tRNA nucleotidyltransferase/poly(A) polymerase family. Bacterial CCA-adding enzyme type 1 subfamily. Monomer. Can also form homodimers and oligomers. Mg(2+) serves as cofactor. Ni(2+) is required as a cofactor.

The enzyme catalyses a tRNA precursor + 2 CTP + ATP = a tRNA with a 3' CCA end + 3 diphosphate. It carries out the reaction a tRNA with a 3' CCA end + 2 CTP + ATP = a tRNA with a 3' CCACCA end + 3 diphosphate. Its function is as follows. Catalyzes the addition and repair of the essential 3'-terminal CCA sequence in tRNAs without using a nucleic acid template. Adds these three nucleotides in the order of C, C, and A to the tRNA nucleotide-73, using CTP and ATP as substrates and producing inorganic pyrophosphate. tRNA 3'-terminal CCA addition is required both for tRNA processing and repair. Also involved in tRNA surveillance by mediating tandem CCA addition to generate a CCACCA at the 3' terminus of unstable tRNAs. While stable tRNAs receive only 3'-terminal CCA, unstable tRNAs are marked with CCACCA and rapidly degraded. This Aliivibrio salmonicida (strain LFI1238) (Vibrio salmonicida (strain LFI1238)) protein is Multifunctional CCA protein.